Reading from the N-terminus, the 224-residue chain is Large ribosomal subunit protein bL25 (224 aa).

The tract at residues 196-224 (VEEVDTDAEEVDAADVPATEQGSEEDKGE) is disordered. The segment covering 197-208 (EEVDTDAEEVDA) has biased composition (acidic residues).

Belongs to the bacterial ribosomal protein bL25 family. CTC subfamily. As to quaternary structure, part of the 50S ribosomal subunit; part of the 5S rRNA/L5/L18/L25 subcomplex. Contacts the 5S rRNA. Binds to the 5S rRNA independently of L5 and L18.

In terms of biological role, this is one of the proteins that binds to the 5S RNA in the ribosome where it forms part of the central protuberance. The protein is Large ribosomal subunit protein bL25 of Psychrobacter sp. (strain PRwf-1).